Reading from the N-terminus, the 852-residue chain is MAKEKISPGMQQYLDIKKNYPDAFLLFRMGDFYELFYDDAVKAAQILEISLTSRNKNADNPIPMAGVPYHSAQAYIDVLVEMGYKVAIAEQMEDPKQAVGVVKREVVQVITPGTVVDSSKPDSANNFLVAIDKVGSRFGLSYMDVSTGEFFATELDDFSSVCSEIQNLKAREVVVGYDLLETDEQVLVNQLNLLLSKETEGYDDVHLIGNSLTDLESSVASKLLQYVHRTQMRELSHLQKAQHYEIKDYLQMSYATKSSLDLLENARTGKKHGSLFWLLDKTKTAMGMRLLRTWIDRPLVNQASIIERQNIIQVFLDNFFERSDLTESLKGVYDIERLASRVSFGKANPKDLIQLGHTLAQVPIIKAILESFNDDALSGLLQELDALPELESLIRSAIDPDAPATITEGGIIRDGFDETLDKYRKVMSEGTSWIADIEAKEREASGITTLKIDYNRKDGYYFHVTNSNLSLVPDHFFRKATLKNSERFGTAELAKIEGEMLEAREKSSTLEYDIFMRVREQVERYIDRLQSLAKAIATVDVLQSLAVTAETNHYVRPVFNDEHRIAIDRGRHAVVEKVMGVQEYIPNTITFDSQTNIQLITGPNMSGKSTYMRQLALSVVMAQMGAYVPADSVDLPVFDAIYTRIGAADDLISGQSTFMVEMMEANQAIKRATPNSLIIFDELGRGTATYDGMALAQSIIEFIHDKVGAKTMFATHYHELTALSNSLTHLVNVHVATLEKDGEVTFLHKIVDGPADKSYGIHVAKIAGLPTDLLNRADTILTQLEGETVVIQPQEKVSSQEKPAIETHVNEQISLFDDFTENPVLQELRDLDIYNMTPMQVMMAVADLKQKL.

Position 602 to 609 (602 to 609 (GPNMSGKS)) interacts with ATP.

Belongs to the DNA mismatch repair MutS family.

This protein is involved in the repair of mismatches in DNA. It is possible that it carries out the mismatch recognition step. This protein has a weak ATPase activity. The chain is DNA mismatch repair protein MutS from Streptococcus thermophilus (strain ATCC BAA-491 / LMD-9).